A 540-amino-acid chain; its full sequence is Terminase large subunit (540 aa).

Residues D352, D424, and D523 each contribute to the Mn(2+) site.

Belongs to the skunavirus terminase large subunit family. As to quaternary structure, interacts with the terminase small subunit; the active complex is probably heterooligomeric. Mn(2+) serves as cofactor. The cofactor is Mg(2+).

In terms of biological role, probable terminase large subunit. The terminase large subunit acts as an ATP driven molecular motor necessary for viral DNA translocation into empty capsids and as an endonuclease that cuts the viral genome to initiate and to end a packaging reaction. The terminase lies at a unique vertex of the procapsid and is composed of two subunits, a small terminase subunit involved in viral DNA recognition (packaging sequence), and a large terminase subunit possessing endonucleolytic and ATPase activities. Both terminase subunits heterooligomerize and are docked on the portal protein to form the packaging machine. The terminase large subunit exhibits endonuclease activity and cleaves the viral genome concatemer. This chain is Terminase large subunit, found in Lactococcus lactis (Lactococcus lactis bacteriophage p2).